Reading from the N-terminus, the 454-residue chain is Bifunctional protein GlmU (454 aa).

Residues 1–230 (MSGRFAVILA…LSETMGVNDR (230 aa)) are pyrophosphorylase. UDP-N-acetyl-alpha-D-glucosamine contacts are provided by residues 9 to 12 (LAAG), lysine 23, glutamine 73, and 78 to 79 (GT). Residue aspartate 103 coordinates Mg(2+). Glycine 140, glutamate 155, asparagine 170, and asparagine 228 together coordinate UDP-N-acetyl-alpha-D-glucosamine. Position 228 (asparagine 228) interacts with Mg(2+). The tract at residues 231-251 (VALSQAEAAMRKRINEEWMRQ) is linker. Residues 252-454 (GVTIIDPQTT…NKDNYVKKDV (203 aa)) are N-acetyltransferase. Residues arginine 333 and lysine 351 each coordinate UDP-N-acetyl-alpha-D-glucosamine. Histidine 363 serves as the catalytic Proton acceptor. UDP-N-acetyl-alpha-D-glucosamine contacts are provided by tyrosine 366 and asparagine 377. Residues 386-387 (NY), serine 405, alanine 423, and arginine 440 contribute to the acetyl-CoA site.

It in the N-terminal section; belongs to the N-acetylglucosamine-1-phosphate uridyltransferase family. In the C-terminal section; belongs to the transferase hexapeptide repeat family. In terms of assembly, homotrimer. It depends on Mg(2+) as a cofactor.

Its subcellular location is the cytoplasm. The enzyme catalyses alpha-D-glucosamine 1-phosphate + acetyl-CoA = N-acetyl-alpha-D-glucosamine 1-phosphate + CoA + H(+). It catalyses the reaction N-acetyl-alpha-D-glucosamine 1-phosphate + UTP + H(+) = UDP-N-acetyl-alpha-D-glucosamine + diphosphate. It functions in the pathway nucleotide-sugar biosynthesis; UDP-N-acetyl-alpha-D-glucosamine biosynthesis; N-acetyl-alpha-D-glucosamine 1-phosphate from alpha-D-glucosamine 6-phosphate (route II): step 2/2. The protein operates within nucleotide-sugar biosynthesis; UDP-N-acetyl-alpha-D-glucosamine biosynthesis; UDP-N-acetyl-alpha-D-glucosamine from N-acetyl-alpha-D-glucosamine 1-phosphate: step 1/1. It participates in bacterial outer membrane biogenesis; LPS lipid A biosynthesis. Functionally, catalyzes the last two sequential reactions in the de novo biosynthetic pathway for UDP-N-acetylglucosamine (UDP-GlcNAc). The C-terminal domain catalyzes the transfer of acetyl group from acetyl coenzyme A to glucosamine-1-phosphate (GlcN-1-P) to produce N-acetylglucosamine-1-phosphate (GlcNAc-1-P), which is converted into UDP-GlcNAc by the transfer of uridine 5-monophosphate (from uridine 5-triphosphate), a reaction catalyzed by the N-terminal domain. This is Bifunctional protein GlmU from Shouchella clausii (strain KSM-K16) (Alkalihalobacillus clausii).